The chain runs to 777 residues: 1,4-alpha-glucan branching enzyme GlgB (777 aa).

Asp408 acts as the Nucleophile in catalysis. The Proton donor role is filled by Glu461.

It belongs to the glycosyl hydrolase 13 family. GlgB subfamily. Monomer.

It catalyses the reaction Transfers a segment of a (1-&gt;4)-alpha-D-glucan chain to a primary hydroxy group in a similar glucan chain.. Its pathway is glycan biosynthesis; glycogen biosynthesis. Catalyzes the formation of the alpha-1,6-glucosidic linkages in glycogen by scission of a 1,4-alpha-linked oligosaccharide from growing alpha-1,4-glucan chains and the subsequent attachment of the oligosaccharide to the alpha-1,6 position. This is 1,4-alpha-glucan branching enzyme GlgB from Actinobacillus pleuropneumoniae serotype 7 (strain AP76).